The following is a 102-amino-acid chain: NADH-quinone oxidoreductase subunit K (102 aa).

The next 3 membrane-spanning stretches (helical) occupy residues 5–25 (LSHY…GIFL), 31–51 (IVIL…MVAF), and 65–85 (LFIL…LVVF).

The protein belongs to the complex I subunit 4L family. NDH-1 is composed of 14 different subunits. Subunits NuoA, H, J, K, L, M, N constitute the membrane sector of the complex.

The protein resides in the cell inner membrane. It carries out the reaction a quinone + NADH + 5 H(+)(in) = a quinol + NAD(+) + 4 H(+)(out). NDH-1 shuttles electrons from NADH, via FMN and iron-sulfur (Fe-S) centers, to quinones in the respiratory chain. The immediate electron acceptor for the enzyme in this species is believed to be ubiquinone. Couples the redox reaction to proton translocation (for every two electrons transferred, four hydrogen ions are translocated across the cytoplasmic membrane), and thus conserves the redox energy in a proton gradient. This chain is NADH-quinone oxidoreductase subunit K, found in Rhizobium johnstonii (strain DSM 114642 / LMG 32736 / 3841) (Rhizobium leguminosarum bv. viciae).